The sequence spans 189 residues: Protein F29A7.6 (189 aa).

Positions 124-161 (KSLGGQKLAALDKKSQSKRERRQQNERNEETTGGRRFN) are disordered. Basic and acidic residues predominate over residues 133 to 161 (ALDKKSQSKRERRQQNERNEETTGGRRFN).

Belongs to the MPP6 family.

This Caenorhabditis elegans protein is Protein F29A7.6.